A 477-amino-acid chain; its full sequence is Glycogen synthase (477 aa).

Residue Lys-15 coordinates ADP-alpha-D-glucose.

It belongs to the glycosyltransferase 1 family. Bacterial/plant glycogen synthase subfamily.

It catalyses the reaction [(1-&gt;4)-alpha-D-glucosyl](n) + ADP-alpha-D-glucose = [(1-&gt;4)-alpha-D-glucosyl](n+1) + ADP + H(+). Its pathway is glycan biosynthesis; glycogen biosynthesis. Synthesizes alpha-1,4-glucan chains using ADP-glucose. The chain is Glycogen synthase from Klebsiella pneumoniae (strain 342).